We begin with the raw amino-acid sequence, 400 residues long: Diphosphomevalonate decarboxylase (400 aa).

Residues 19–22 (YWGK), Arg-75, 154–159 (SGSACR), and Thr-210 contribute to the (R)-5-diphosphomevalonate site. Positions 381 to 400 (DGPRTLGPEEALLSPDGLPK) are disordered.

Belongs to the diphosphomevalonate decarboxylase family.

The enzyme catalyses (R)-5-diphosphomevalonate + ATP = isopentenyl diphosphate + ADP + phosphate + CO2. The protein operates within isoprenoid biosynthesis; isopentenyl diphosphate biosynthesis via mevalonate pathway; isopentenyl diphosphate from (R)-mevalonate: step 3/3. Functionally, diphosphomevalonate decarboxylase; part of the second module of ergosterol biosynthesis pathway that includes the middle steps of the pathway. The second module involves the formation of farnesyl diphosphate, which is also an important intermediate in the biosynthesis of ubiquinone, dolichol, heme and prenylated proteins. This module also plays a key role in the biosynthesis of triterpenes such as ganoderic acids (GA), a group of highly oxygenated lanostane-type triterpenoids which are well recognized as a main group of unique bioactive compounds in the medicinal mushroom Ganoderma lucidum. Activity by the mevalonate kinase first converts mevalonate into 5-phosphomevalonate. 5-phosphomevalonate is then further converted to 5-diphosphomevalonate by the phosphomevalonate kinase. The diphosphomevalonate decarboxylase MVD then produces isopentenyl diphosphate. The isopentenyl-diphosphate delta-isomerase then catalyzes the 1,3-allylic rearrangement of the homoallylic substrate isopentenyl (IPP) to its highly electrophilic allylic isomer, dimethylallyl diphosphate (DMAPP). Finally the farnesyl diphosphate synthase FPS catalyzes the sequential condensation of isopentenyl pyrophosphate with dimethylallyl pyrophosphate, and then with the resultant geranylpyrophosphate to the ultimate product farnesyl pyrophosphate. The polypeptide is Diphosphomevalonate decarboxylase (Ganoderma lucidum (Ling zhi medicinal fungus)).